An 881-amino-acid chain; its full sequence is Receptor-like protein 41 (881 aa).

Positions 1 to 21 (MSELLLRLNFLLLLLLSCVSP) are cleaved as a signal peptide. Over 22–844 (SSFVTFNNPV…EEQEQVLNWE (823 aa)) the chain is Extracellular. N-linked (GlcNAc...) asparagine glycans are attached at residues N58, N70, N91, N109, and N145. LRR repeat units follow at residues 97 to 121 (FHEL…KFGM), 122 to 145 (LNKL…SFSN), 146 to 169 (LSML…VRNL), 170 to 195 (RKLR…LFEL), 197 to 219 (HLTY…EFGN), 220 to 244 (LNKL…ISNL), 245 to 267 (TQLT…VQNL), 268 to 291 (TKLS…LFTM), 293 to 317 (FLSY…SSSS), 319 to 340 (LESL…ISKL), 342 to 364 (NLKE…LFSS), 365 to 390 (FKSL…SYIS), 391 to 412 (LTLE…ILKS), 413 to 437 (LPNL…LWSL), 439 to 462 (RLSS…ILVN), and 463 to 486 (SSVQ…PLSI). N189 is a glycosylation site (N-linked (GlcNAc...) asparagine). 2 N-linked (GlcNAc...) asparagine glycosylation sites follow: N243 and N266. 2 N-linked (GlcNAc...) asparagine glycosylation sites follow: N305 and N312. N-linked (GlcNAc...) asparagine glycosylation occurs at N402. N-linked (GlcNAc...) asparagine glycosylation occurs at N462. The LRR 17; degenerate repeat unit spans residues 487 to 506 (IYFSARYNRFKGDIPLSICN). N-linked (GlcNAc...) asparagine glycans are attached at residues N506 and N519. LRR repeat units follow at residues 507-528 (RSSL…PPCL), 529-552 (SNLL…YFAD), 554-576 (PLRS…LLNC), 578-599 (ALQF…YLKV), 600-624 (LPKL…NQGS), 627-651 (FPEL…FFVN), 701-724 (TSSA…IGLL), 725-748 (KALI…LANL), 749-772 (VKIE…LGTL), and 774-797 (FLAY…QITG). N575 carries an N-linked (GlcNAc...) asparagine glycan. Residue N731 is glycosylated (N-linked (GlcNAc...) asparagine). An N-linked (GlcNAc...) asparagine glycan is attached at N779. A helical transmembrane segment spans residues 845-865 (GVAIGYGVGVLLGLAIAQLIA). Over 866-881 (SYKPEWLACLIKSRNR) the chain is Cytoplasmic.

This sequence belongs to the RLP family.

Its subcellular location is the cell membrane. Its function is as follows. May be involved in ABA-induced senescence responses. The sequence is that of Receptor-like protein 41 from Arabidopsis thaliana (Mouse-ear cress).